A 126-amino-acid chain; its full sequence is MPEPSKSAPAPKKGSKKAITKAQKKDGKKRKRSRKESYSIYVYKVLKQVHPDTGISSKAMGIMNSFVNDIFERIAGEASRLAHYNKRSTITSREIQTAVRLLLPGELAKHAVSEGTKAVTKYTSSK.

A compositionally biased stretch (low complexity) spans 1–12 (MPEPSKSAPAPK). Positions 1-35 (MPEPSKSAPAPKKGSKKAITKAQKKDGKKRKRSRK) are disordered. At Pro-2 the chain carries N-acetylproline. At Glu-3 the chain carries ADP-ribosyl glutamic acid. Lys-6 is modified (N6-(2-hydroxyisobutyryl)lysine; alternate). At Lys-6 the chain carries N6-(beta-hydroxybutyryl)lysine; alternate. At Lys-6 the chain carries N6-acetyllysine; alternate. Lys-6 is subject to N6-butyryllysine; alternate. Lys-6 bears the N6-crotonyllysine; alternate mark. Lys-6 is subject to N6-lactoyllysine; alternate. Lys-6 is covalently cross-linked (Glycyl lysine isopeptide (Lys-Gly) (interchain with G-Cter in SUMO2); alternate). Ser-7 is modified (ADP-ribosylserine). An N6-(beta-hydroxybutyryl)lysine; alternate modification is found at Lys-12. Lys-12 and Lys-13 each carry N6-acetyllysine; alternate. N6-crotonyllysine; alternate is present on residues Lys-12 and Lys-13. The residue at position 12 (Lys-12) is an N6-lactoyllysine; alternate. Lys-13 bears the N6-(2-hydroxyisobutyryl)lysine; alternate mark. Ser-15 is subject to Phosphoserine; by STK4/MST1. Lys-16, Lys-17, Lys-21, and Lys-24 each carry N6-acetyllysine; alternate. 4 positions are modified to N6-crotonyllysine; alternate: Lys-16, Lys-17, Lys-21, and Lys-24. Residues Lys-16, Lys-17, Lys-21, and Lys-24 each carry the N6-lactoyllysine; alternate modification. Lys-17 and Lys-21 each carry N6-(beta-hydroxybutyryl)lysine; alternate. Lys-17 carries the post-translational modification N6-glutaryllysine; alternate. N6-(2-hydroxyisobutyryl)lysine; alternate is present on residues Lys-21 and Lys-24. Residue Lys-21 is modified to N6-butyryllysine; alternate. Lys-21 is covalently cross-linked (Glycyl lysine isopeptide (Lys-Gly) (interchain with G-Cter in SUMO2); alternate). N6-(2-hydroxyisobutyryl)lysine is present on Lys-25. Lys-35 is modified (N6-(2-hydroxyisobutyryl)lysine; alternate). Lys-35 carries the post-translational modification N6-(beta-hydroxybutyryl)lysine; alternate. Lys-35 bears the N6-crotonyllysine; alternate mark. Position 35 is an N6-glutaryllysine; alternate (Lys-35). Lys-35 bears the N6-succinyllysine; alternate mark. Lys-35 is covalently cross-linked (Glycyl lysine isopeptide (Lys-Gly) (interchain with G-Cter in ubiquitin); alternate). Glu-36 is modified (polyADP-ribosyl glutamic acid). Residue Ser-37 is modified to Phosphoserine; by AMPK. N6-(2-hydroxyisobutyryl)lysine; alternate is present on residues Lys-44, Lys-47, and Lys-58. Residue Lys-44 is modified to N6-lactoyllysine; alternate. An N6-glutaryllysine; alternate mark is found at Lys-44 and Lys-47. At Lys-47 the chain carries N6-methyllysine; alternate. Residue Lys-58 is modified to N6,N6-dimethyllysine; alternate. Arg-80 bears the Dimethylated arginine mark. Lys-86 carries the post-translational modification N6-(2-hydroxyisobutyryl)lysine; alternate. The residue at position 86 (Lys-86) is an N6-(beta-hydroxybutyryl)lysine; alternate. Lys-86 carries the N6-acetyllysine; alternate modification. Lys-86 bears the N6-lactoyllysine; alternate mark. Lys-86 is modified (N6,N6,N6-trimethyllysine; alternate). 2 positions are modified to omega-N-methylarginine: Arg-87 and Arg-93. Position 109 is an N6-(2-hydroxyisobutyryl)lysine; alternate (Lys-109). N6-lactoyllysine; alternate is present on Lys-109. An N6-glutaryllysine; alternate modification is found at Lys-109. Lys-109 is modified (N6-methyllysine; alternate). O-linked (GlcNAc) serine glycosylation occurs at Ser-113. Thr-116 carries the phosphothreonine modification. 2 positions are modified to N6-(2-hydroxyisobutyryl)lysine; alternate: Lys-117 and Lys-121. An N6-(beta-hydroxybutyryl)lysine; alternate mark is found at Lys-117 and Lys-121. 2 positions are modified to N6-lactoyllysine; alternate: Lys-117 and Lys-121. Residues Lys-117 and Lys-121 each carry the N6-glutaryllysine; alternate modification. An N6-succinyllysine; alternate mark is found at Lys-117 and Lys-121. Lys-117 carries the N6-malonyllysine; alternate modification. N6-methylated lysine; alternate is present on Lys-117. Residue Lys-121 forms a Glycyl lysine isopeptide (Lys-Gly) (interchain with G-Cter in ubiquitin); alternate linkage.

Belongs to the histone H2B family. In terms of assembly, the nucleosome is a histone octamer containing two molecules each of H2A, H2B, H3 and H4 assembled in one H3-H4 heterotetramer and two H2A-H2B heterodimers. The octamer wraps approximately 147 bp of DNA. In terms of processing, monoubiquitination at Lys-35 (H2BK34Ub) by the MSL1/MSL2 dimer is required for histone H3 'Lys-4' (H3K4me) and 'Lys-79' (H3K79me) methylation and transcription activation at specific gene loci, such as HOXA9 and MEIS1 loci. Similarly, monoubiquitination at Lys-121 (H2BK120Ub) by the RNF20/40 complex gives a specific tag for epigenetic transcriptional activation and is also prerequisite for histone H3 'Lys-4' and 'Lys-79' methylation. It also functions cooperatively with the FACT dimer to stimulate elongation by RNA polymerase II. H2BK120Ub also acts as a regulator of mRNA splicing: deubiquitination by USP49 is required for efficient cotranscriptional splicing of a large set of exons. Post-translationally, phosphorylation at Ser-37 (H2BS36ph) by AMPK in response to stress promotes transcription. Phosphorylated on Ser-15 (H2BS14ph) by STK4/MST1 during apoptosis; which facilitates apoptotic chromatin condensation. Also phosphorylated on Ser-15 in response to DNA double strand breaks (DSBs), and in correlation with somatic hypermutation and immunoglobulin class-switch recombination. GlcNAcylation at Ser-113 promotes monoubiquitination of Lys-121. It fluctuates in response to extracellular glucose, and associates with transcribed genes. In terms of processing, ADP-ribosylated by PARP1 or PARP2 on Ser-7 (H2BS6ADPr) in response to DNA damage. H2BS6ADPr promotes recruitment of CHD1L. Mono-ADP-ribosylated on Glu-3 (H2BE2ADPr) by PARP3 in response to single-strand breaks. Poly ADP-ribosylation on Glu-36 (H2BE35ADPr) by PARP1 regulates adipogenesis: it inhibits phosphorylation at Ser-37 (H2BS36ph), thereby blocking expression of pro-adipogenetic genes. Post-translationally, crotonylation (Kcr) is specifically present in male germ cells and marks testis-specific genes in post-meiotic cells, including X-linked genes that escape sex chromosome inactivation in haploid cells. Crotonylation marks active promoters and enhancers and confers resistance to transcriptional repressors. It is also associated with post-meiotically activated genes on autosomes. Lactylated in macrophages by EP300/P300 by using lactoyl-CoA directly derived from endogenous or exogenous lactate, leading to stimulates gene transcription.

Its subcellular location is the nucleus. It localises to the chromosome. Core component of nucleosome. Nucleosomes wrap and compact DNA into chromatin, limiting DNA accessibility to the cellular machineries which require DNA as a template. Histones thereby play a central role in transcription regulation, DNA repair, DNA replication and chromosomal stability. DNA accessibility is regulated via a complex set of post-translational modifications of histones, also called histone code, and nucleosome remodeling. The sequence is that of Histone H2B type 1-B from Homo sapiens (Human).